We begin with the raw amino-acid sequence, 282 residues long: NADPH-dependent 7-cyano-7-deazaguanine reductase (282 aa).

88-90 (IES) is a substrate binding site. Position 90 to 91 (90 to 91 (SK)) interacts with NADPH. Catalysis depends on C190, which acts as the Thioimide intermediate. D197 serves as the catalytic Proton donor. 229 to 230 (HE) serves as a coordination point for substrate. 258 to 259 (RG) is an NADPH binding site.

The protein belongs to the GTP cyclohydrolase I family. QueF type 2 subfamily. As to quaternary structure, homodimer.

The protein resides in the cytoplasm. It carries out the reaction 7-aminomethyl-7-carbaguanine + 2 NADP(+) = 7-cyano-7-deazaguanine + 2 NADPH + 3 H(+). The protein operates within tRNA modification; tRNA-queuosine biosynthesis. Its function is as follows. Catalyzes the NADPH-dependent reduction of 7-cyano-7-deazaguanine (preQ0) to 7-aminomethyl-7-deazaguanine (preQ1). This Salmonella heidelberg (strain SL476) protein is NADPH-dependent 7-cyano-7-deazaguanine reductase.